A 1465-amino-acid chain; its full sequence is Transcriptional elongation regulator MINIYO (1465 aa).

Disordered stretches follow at residues 27-85 (KGIS…AEER), 186-211 (LNASPPLAVSNGLGTRHASSSLESDI), and 1113-1135 (TIHEDGEMSNSSTQDKKSDSSTI).

It belongs to the RPAP1 family. In terms of assembly, interacts with HAG3, NRPB3 and NRPB10L. As to expression, expressed in root and shoot apices and in leaf and flower primordia. Detected in the endosperm, embryo, meristems and in organ primordia, but not in mature cells. Found exclusively in the vascular bundles in mature leaves.

It is found in the cytoplasm. The protein resides in the nucleus. Positive regulator of transcriptional elongation that is essential for cells to initiate differentiation. Interacts with RNA polymerase II and the Elongator complex and is required to sustain global levels of transcriptional elongation activity, specifically in differentiating tissues. This chain is Transcriptional elongation regulator MINIYO, found in Arabidopsis thaliana (Mouse-ear cress).